The sequence spans 324 residues: ATP phosphoribosyltransferase regulatory subunit (324 aa).

The protein belongs to the class-II aminoacyl-tRNA synthetase family. HisZ subfamily. Heteromultimer composed of HisG and HisZ subunits.

It localises to the cytoplasm. The protein operates within amino-acid biosynthesis; L-histidine biosynthesis; L-histidine from 5-phospho-alpha-D-ribose 1-diphosphate: step 1/9. In terms of biological role, required for the first step of histidine biosynthesis. May allow the feedback regulation of ATP phosphoribosyltransferase activity by histidine. This Carboxydothermus hydrogenoformans (strain ATCC BAA-161 / DSM 6008 / Z-2901) protein is ATP phosphoribosyltransferase regulatory subunit.